Here is a 767-residue protein sequence, read N- to C-terminus: MTDPTKRRMIGSTVPAKVREYYNQGHQCLLQEDWEMSVLFFSRALHLDPKLVDFYVFRAEAFIQLCDFSSALQNLRRAYSYDPGNNKYLNRLAFVLYLQGQCLYELCDFQEALCVFLQASDLQPQNASFSYRCMACLLALKRYHDCLALITREVKQGRASADVYILRARLYNFFQKAKLCYQDLRSALLLDPLHAQAKGLLQKMVDQAKQSLQDASTLAVQGKVHRALKCINCAIENNPLDPNFFFFRGTLRRRLQQFDHAVEDFLKAMDMVTDTQDNLVKQAQRQLLLTYNDFAVHCYNHGAYQEGVLLLNKAIRDEQNEKGLYINRGDCFFQLGNLAFAEADYKQALALSPLDEGANLRMGVLQEKLGFCQQKHRQFQTAEEHFSEAIRHSPQKPQYYLHRAKCRQFLQNTLGARLDVATVLLVNPEYPKMAAVMNTLFPSMTVENVLKSQVAELAKLQLSRMIENGPKNIYPQSTVVQRLLERRKAQVLVKLWKQERLGTPEEEVTLYQAPQLAEEKKVKTARRRTSLTDSYADQTSSGSVFSIVSISTSGPEMSTSQEYKSSSHTAIEFSESTLLKPQLSVPRKSQELTWSPKVVQAVTENLIQNATEVTPAYGQRDSKKATQVPKPKKTEDPKDPSQSTSTTEAPEGPRPSKSRSTLSVKERIRRAKAVRAQGWKLKAQRSSQKVTKTPSLTHSTTHSDIGESANDTPGQTPWPSKAADSLSFSEISSTDLSSSESFLELTNLLTQEVQQIPGDREKLTSDD.

TPR repeat units follow at residues 18–51 (VREY…DPKL), 53–85 (DFYV…DPGN), 93–126 (AFVL…QPQN), 128–155 (SFSY…REVK), 208–241 (AKQS…NPLD), 242–275 (PNFF…VTDT), 288–321 (LLTY…EQNE), 322–355 (KGLY…SPLD), and 363–396 (GVLQ…SPQK). Positions 612 to 733 (EVTPAYGQRD…DSLSFSEISS (122 aa)) are disordered. Residues 684–718 (QRSSQKVTKTPSLTHSTTHSDIGESANDTPGQTPW) are compositionally biased toward polar residues.

The sequence is that of Tetratricopeptide repeat protein 16 (Ttc16) from Mus musculus (Mouse).